The sequence spans 639 residues: ATP-dependent zinc metalloprotease FtsH (639 aa).

Over 1-20 (MNGNNNMNNNGKSNNKKKNK) the chain is Cytoplasmic. Residues 21–41 (NWILGLVVVFLISAIFMSYFI) traverse the membrane as a helical segment. Over 42-120 (RGGESYKNVP…LSSGKSQASL (79 aa)) the chain is Periplasmic. Residues 121 to 141 (IGVLLQTLPWILFFIFFFFIF) traverse the membrane as a helical segment. Over 142-639 (RQTQGGGGKV…KEVKGEDVKG (498 aa)) the chain is Cytoplasmic. ATP is bound at residue 212 to 219 (GSPGTGKT). A Zn(2+)-binding site is contributed by His434. Glu435 is a catalytic residue. Zn(2+) is bound by residues His438 and Asp510.

The protein in the central section; belongs to the AAA ATPase family. In the C-terminal section; belongs to the peptidase M41 family. As to quaternary structure, homohexamer. The cofactor is Zn(2+).

The protein resides in the cell inner membrane. Functionally, acts as a processive, ATP-dependent zinc metallopeptidase for both cytoplasmic and membrane proteins. Plays a role in the quality control of integral membrane proteins. This is ATP-dependent zinc metalloprotease FtsH from Borreliella burgdorferi (strain ZS7) (Borrelia burgdorferi).